The primary structure comprises 436 residues: MYCSSSMHPNANKENISTSDVQESFVRITRSRAKKAMGRGVSIPPTKPSFKQQKRRAVLKDVSNTSADIIYSELRKGGNIKANRKCLKEPKKAAKEGANSAMDILVDMHTEKSKLAEDLSKIRMAEAQDVSLSNFKDEEITEQQEDGSGVMELLQVVDIDSNVEDPQCCSLYAADIYDNIHVAELQQRPLANYMELVQRDIDPDMRKILIDWLVEVSDDYKLVPDTLYLTVNLIDRFLSNSYIERQRLQLLGVSCMLIASKYEELSAPGVEEFCFITANTYTRPEVLSMEIQILNFVHFRLSVPTTKTFLRRFIKAAQASYKVPFIELEYLANYLAELTLVEYSFLRFLPSLIAASAVFLARWTLDQTDHPWNPTLQHYTRYEVAELKNTVLAMEDLQLNTSGCTLAATREKYNQPKFKSVAKLTSPKRVTSLFSR.

Belongs to the cyclin family. Cyclin AB subfamily. Expressed in roots, stems, leaves, flowers and siliques.

The protein is Cyclin-A2-2 (CYCA2-2) of Arabidopsis thaliana (Mouse-ear cress).